Here is a 349-residue protein sequence, read N- to C-terminus: KH domain-containing, RNA-binding, signal transduction-associated protein 2 (349 aa).

Positions 65–135 (LIPVKQYPKF…HLSDELHVLI (71 aa)) constitute a KH domain. 2 disordered regions span residues 181-263 (SEES…PPPA) and 321-349 (EWATTRSSLKAPPPRSARGGYREHPYGRY). Positions 218 to 231 (RGVLTPRGTTVTRG) are enriched in low complexity. Omega-N-methylarginine is present on residues arginine 230 and arginine 240. Positions 340-349 (GYREHPYGRY) are enriched in basic and acidic residues.

This sequence belongs to the KHDRBS family. In terms of assembly, self-associates to form homooligomers. Interacts with KHDRBS1/SAM68; heterooligomer formation of KHDRBS family proteins may modulate RNA substrate specificity. Interacts with RBMX, SAFB, SFRS9 and YTHDC1. Interacts with FYN and PLCG1 (via SH3 domain). Interacts (phosphorylated) with FYN, GRB2, PLCG1 and RASA1 (via SH2 domain). Methylated. Post-translationally, tyrosine phosphorylated by FYN, PTK6 and SRC. Tyrosine phosphorylated by SRC during mitosis. Expressed in heart, skin, brain, colon, spleen, kidney, cervix and testis. In adult cerebellum expressed predominantly in Purkinje cells and in the hippocampus is abundantly expressed in glutamatergic dentate granule cells and in specific inhibitory Schaffer collateral-associated and path-associated interneurons; expression is restricted to neuronal subpopulations largely non-overlapping with expression of KHDRBS3/SLM-2 (at protein level).

It localises to the nucleus. RNA-binding protein that plays a role in the regulation of alternative splicing and influences mRNA splice site selection and exon inclusion. Binds both poly(A) and poly(U) homopolymers. Phosphorylation by PTK6 inhibits its RNA-binding ability. Induces an increased concentration-dependent incorporation of exon in CD44 pre-mRNA by direct binding to purine-rich exonic enhancer. Can regulate alternative splicing of neurexins NRXN1-3 in the laminin G-like domain 6 containing the evolutionary conserved neurexin alternative spliced segment 4 (AS4) involved in neurexin selective targeting to postsynaptic partners. Regulates cell-type specific alternative splicing of NRXN1 at AS4 and acts synergystically with SAM68 in exon skipping. In contrast acts antagonistically with SAM68 in NRXN3 exon skipping at AS4. Its phosphorylation by FYN inhibits its ability to regulate splice site selection. May function as an adapter protein for Src kinases during mitosis. The protein is KH domain-containing, RNA-binding, signal transduction-associated protein 2 (Khdrbs2) of Mus musculus (Mouse).